The sequence spans 334 residues: Holliday junction branch migration complex subunit RuvB (334 aa).

The large ATPase domain (RuvB-L) stretch occupies residues 1–181; sequence MSEFLTPERT…GIILELDFYT (181 aa). Residues L19 and R20 each contribute to the ADP site. Positions 26, 27, and 28 each coordinate ATP. ADP is bound by residues F27, I28, G61, L62, G63, K64, T65, and T66. The ATP site is built by L62 and G63. Residues 127–129 and R170 contribute to the ATP site; that span reads EDF. Positions 180, 216, and 217 each coordinate ADP. A small ATPAse domain (RuvB-S) region spans residues 182-255; that stretch reads VKELKEIIKR…TMEVLNIDDE (74 aa). P216 is a binding site for ATP. The segment at 256–334 is head domain (RuvB-H); it reads GLDEFDRKIL…KYEVPENRLF (79 aa). The DNA site is built by R309 and R314.

It belongs to the RuvB family. In terms of assembly, homohexamer. Forms an RuvA(8)-RuvB(12)-Holliday junction (HJ) complex. HJ DNA is sandwiched between 2 RuvA tetramers; dsDNA enters through RuvA and exits via RuvB. An RuvB hexamer assembles on each DNA strand where it exits the tetramer. Each RuvB hexamer is contacted by two RuvA subunits (via domain III) on 2 adjacent RuvB subunits; this complex drives branch migration. In the full resolvosome a probable DNA-RuvA(4)-RuvB(12)-RuvC(2) complex forms which resolves the HJ.

It localises to the cytoplasm. It carries out the reaction ATP + H2O = ADP + phosphate + H(+). The RuvA-RuvB-RuvC complex processes Holliday junction (HJ) DNA during genetic recombination and DNA repair, while the RuvA-RuvB complex plays an important role in the rescue of blocked DNA replication forks via replication fork reversal (RFR). RuvA specifically binds to HJ cruciform DNA, conferring on it an open structure. The RuvB hexamer acts as an ATP-dependent pump, pulling dsDNA into and through the RuvAB complex. RuvB forms 2 homohexamers on either side of HJ DNA bound by 1 or 2 RuvA tetramers; 4 subunits per hexamer contact DNA at a time. Coordinated motions by a converter formed by DNA-disengaged RuvB subunits stimulates ATP hydrolysis and nucleotide exchange. Immobilization of the converter enables RuvB to convert the ATP-contained energy into a lever motion, pulling 2 nucleotides of DNA out of the RuvA tetramer per ATP hydrolyzed, thus driving DNA branch migration. The RuvB motors rotate together with the DNA substrate, which together with the progressing nucleotide cycle form the mechanistic basis for DNA recombination by continuous HJ branch migration. Branch migration allows RuvC to scan DNA until it finds its consensus sequence, where it cleaves and resolves cruciform DNA. Functionally, promotes Holliday junction (HJ) branch migration in conjunction with RuvA. Subunits can be free, ADP- or ATP-bound; nucleotide binding changes during the reaction cycle. Has a DNA-dependent ATPase activity; dsDNA and supercoiled DNA but not ssDNA stimulate activity. This is Holliday junction branch migration complex subunit RuvB from Thermotoga maritima (strain ATCC 43589 / DSM 3109 / JCM 10099 / NBRC 100826 / MSB8).